A 94-amino-acid chain; its full sequence is Acylphosphatase (94 aa).

The Acylphosphatase-like domain maps to 3–90; sequence RVHVIVEGRV…PDEKQFRIMY (88 aa). Residues Arg-18 and Asn-36 contribute to the active site.

The protein belongs to the acylphosphatase family.

It catalyses the reaction an acyl phosphate + H2O = a carboxylate + phosphate + H(+). The chain is Acylphosphatase (acyP) from Geobacillus thermodenitrificans (strain NG80-2).